The primary structure comprises 220 residues: Fibroblast growth factor 3 (220 aa).

The signal sequence occupies residues 1 to 19 (MLVIWLLLLALLPEPRVPA). Residues 19 to 40 (AATASPRAPRDAGGRGGVYEHL) form a disordered region. Residue Asn-66 is glycosylated (N-linked (GlcNAc...) asparagine).

This sequence belongs to the heparin-binding growth factors family.

It localises to the secreted. Its function is as follows. Plays an important role in the regulation of embryonic development, cell proliferation, and cell differentiation. This Gallus gallus (Chicken) protein is Fibroblast growth factor 3 (FGF3).